The sequence spans 141 residues: Putative pre-16S rRNA nuclease (141 aa).

Belongs to the YqgF nuclease family.

Its subcellular location is the cytoplasm. Functionally, could be a nuclease involved in processing of the 5'-end of pre-16S rRNA. This Pseudomonas putida (strain ATCC 47054 / DSM 6125 / CFBP 8728 / NCIMB 11950 / KT2440) protein is Putative pre-16S rRNA nuclease.